A 261-amino-acid polypeptide reads, in one-letter code: Cytochrome c oxidase subunit 3 (261 aa).

Over 1 to 15 (MTHQTHAYHMVNPSP) the chain is Mitochondrial matrix. The helical transmembrane segment at 16-34 (WPLTGALSALLMTSGLIMW) threads the bilayer. The Mitochondrial intermembrane segment spans residues 35-40 (FHFNSV). The chain crosses the membrane as a helical span at residues 41–66 (ALLTLGLTTNMLTMYQWWRDVIREST). Topologically, residues 67-72 (FQGHHT) are mitochondrial matrix. Residues 73–105 (PNVQKGLRYGMILFIISEVLFFTGFFWAFYHSS) form a helical membrane-spanning segment. Residues 106 to 128 (LAPTPELGGCWPPTGIHPLNPLE) are Mitochondrial intermembrane-facing. Residues 129–152 (VPLLNTSVLLASGVSITWAHHSLM) form a helical membrane-spanning segment. Over 153–155 (EGN) the chain is Mitochondrial matrix. The chain crosses the membrane as a helical span at residues 156-183 (RNHMLQALFITIALGVYFTLLQASEYYE). Residues 184–190 (APFTISD) are Mitochondrial intermembrane-facing. Residues 191–223 (GVYGSTFFVATGFHGLHVIIGSTFLIVCFFRQL) traverse the membrane as a helical segment. Residues 224–232 (KFHFTSSHH) lie on the Mitochondrial matrix side of the membrane. The helical transmembrane segment at 233 to 256 (FGFEAAAWYWHFVDVVWLFLYVSI) threads the bilayer. Residues 257-261 (YWWGS) lie on the Mitochondrial intermembrane side of the membrane.

The protein belongs to the cytochrome c oxidase subunit 3 family. In terms of assembly, component of the cytochrome c oxidase (complex IV, CIV), a multisubunit enzyme composed of 14 subunits. The complex is composed of a catalytic core of 3 subunits MT-CO1, MT-CO2 and MT-CO3, encoded in the mitochondrial DNA, and 11 supernumerary subunits COX4I, COX5A, COX5B, COX6A, COX6B, COX6C, COX7A, COX7B, COX7C, COX8 and NDUFA4, which are encoded in the nuclear genome. The complex exists as a monomer or a dimer and forms supercomplexes (SCs) in the inner mitochondrial membrane with NADH-ubiquinone oxidoreductase (complex I, CI) and ubiquinol-cytochrome c oxidoreductase (cytochrome b-c1 complex, complex III, CIII), resulting in different assemblies (supercomplex SCI(1)III(2)IV(1) and megacomplex MCI(2)III(2)IV(2)).

Its subcellular location is the mitochondrion inner membrane. It carries out the reaction 4 Fe(II)-[cytochrome c] + O2 + 8 H(+)(in) = 4 Fe(III)-[cytochrome c] + 2 H2O + 4 H(+)(out). In terms of biological role, component of the cytochrome c oxidase, the last enzyme in the mitochondrial electron transport chain which drives oxidative phosphorylation. The respiratory chain contains 3 multisubunit complexes succinate dehydrogenase (complex II, CII), ubiquinol-cytochrome c oxidoreductase (cytochrome b-c1 complex, complex III, CIII) and cytochrome c oxidase (complex IV, CIV), that cooperate to transfer electrons derived from NADH and succinate to molecular oxygen, creating an electrochemical gradient over the inner membrane that drives transmembrane transport and the ATP synthase. Cytochrome c oxidase is the component of the respiratory chain that catalyzes the reduction of oxygen to water. Electrons originating from reduced cytochrome c in the intermembrane space (IMS) are transferred via the dinuclear copper A center (CU(A)) of subunit 2 and heme A of subunit 1 to the active site in subunit 1, a binuclear center (BNC) formed by heme A3 and copper B (CU(B)). The BNC reduces molecular oxygen to 2 water molecules using 4 electrons from cytochrome c in the IMS and 4 protons from the mitochondrial matrix. This chain is Cytochrome c oxidase subunit 3 (MT-CO3), found in Nanger dama (Dama gazelle).